The primary structure comprises 133 residues: Small ribosomal subunit protein uS8 (133 aa).

The protein belongs to the universal ribosomal protein uS8 family. As to quaternary structure, part of the 30S ribosomal subunit. Contacts proteins S5 and S12.

Functionally, one of the primary rRNA binding proteins, it binds directly to 16S rRNA central domain where it helps coordinate assembly of the platform of the 30S subunit. This is Small ribosomal subunit protein uS8 from Protochlamydia amoebophila (strain UWE25).